Reading from the N-terminus, the 112-residue chain is UPF0060 membrane protein Daro_2632 (112 aa).

The next 4 helical transmembrane spans lie at 7-27 (VLGL…LPWL), 34-54 (PVWL…LLTL), 59-79 (AGRI…IWLW), and 89-109 (WDLV…LQPA).

The protein belongs to the UPF0060 family.

It is found in the cell inner membrane. The protein is UPF0060 membrane protein Daro_2632 of Dechloromonas aromatica (strain RCB).